Consider the following 69-residue polypeptide: MDRTAAQNARESLDLAFSISNFLQTGLDRHTLSILIALCEHGVNPEALAAVVKELRREAAALHQHQDQS.

The protein belongs to the MOZART1 family. Part of the gamma-tubulin complex.

The protein resides in the cytoplasm. The protein localises to the cytoskeleton. Its subcellular location is the microtubule organizing center. It is found in the spindle. Functionally, required for gamma-tubulin complex recruitment to the microtubule organizing centers (MTOCs). This Picea sitchensis (Sitka spruce) protein is Mitotic-spindle organizing protein 1.